The sequence spans 118 residues: Large ribosomal subunit protein bL20 (118 aa).

This sequence belongs to the bacterial ribosomal protein bL20 family.

In terms of biological role, binds directly to 23S ribosomal RNA and is necessary for the in vitro assembly process of the 50S ribosomal subunit. It is not involved in the protein synthesizing functions of that subunit. The sequence is that of Large ribosomal subunit protein bL20 from Psychrobacter arcticus (strain DSM 17307 / VKM B-2377 / 273-4).